Consider the following 452-residue polypeptide: Lamina-associated polypeptide 2, isoforms beta/delta/epsilon/gamma (452 aa).

Positions 1-409 (MPEFLEDPSV…KSEKTKKRRS (409 aa)) are nucleoplasmic. Positions 5–48 (LEDPSVLTKDKLKSELVANNVTLPAGEQRKDVYVQLYLQHLTAR) constitute an LEM-like domain. Disordered stretches follow at residues 48-111 (RNRP…DLDV) and 149-263 (REQG…RVET). Residues 49 to 108 (NRPPLAAGANSKGPPDFSSDEEREPTPVLGSGASVGRGRGAVGRKATKKTDKPRLEDKDD) form a linker region. Residues serine 59, serine 66, and serine 67 each carry the phosphoserine modification. Threonine 74 is subject to Phosphothreonine. Phosphoserine occurs at positions 79 and 82. Omega-N-methylarginine occurs at positions 85 and 87. Over residues 96 to 105 (KKTDKPRLED) the composition is skewed to basic and acidic residues. In terms of domain architecture, LEM spans 109–153 (LDVTELSNEELLDQLVRYGVNPGPIVGTTRKLYEKKLLKLREQGT). An NAKAP95-binding N region spans residues 137-242 (TRKLYEKKLL…TSGSSTGGPL (106 aa)). Phosphothreonine is present on threonine 153. A compositionally biased stretch (polar residues) spans 154-177 (ESRSSTPLPTVSSSAENTRQNGSN). Residues serine 155 and serine 158 each carry the phosphoserine modification. Phosphothreonine occurs at positions 159 and 163. Residues serine 165, serine 167, and serine 176 each carry the phosphoserine modification. Over residues 178-202 (DSDRYSDNDEDSKIELKLEKREPLK) the composition is skewed to basic and acidic residues. Serine 179 carries the post-translational modification Phosphoserine; by PKC. Serine 183 and serine 189 each carry phosphoserine. Lysine 206 carries the post-translational modification N6-acetyllysine. Threonine 210 bears the Phosphothreonine mark. 2 positions are modified to phosphoserine: serine 221 and serine 223. Positions 226 to 240 (GVTETEWTSGSSTGG) are enriched in low complexity. Phosphoserine is present on residues serine 249, serine 253, serine 264, serine 291, serine 305, and serine 306. Residues 298-370 (TGNFKHASSI…SCRRPIKGAA (73 aa)) form a binds lamins B region. Residues 299–373 (GNFKHASSIL…RPIKGAAGRP (75 aa)) are NAKAP95-binding C. At threonine 311 the chain carries Phosphothreonine. The residue at position 314 (serine 314) is a Phosphoserine. Arginine 319 bears the Citrulline mark. Residues serine 361, serine 377, and serine 384 each carry the phosphoserine modification. The residue at position 388 (lysine 388) is an N6-acetyllysine. A Glycyl lysine isopeptide (Lys-Gly) (interchain with G-Cter in SUMO2) cross-link involves residue lysine 400. At serine 401 the chain carries Phosphoserine. Residues 410–430 (VPMWIKMLLFALVAVFLFLVY) form a helical; Signal-anchor for type II membrane protein membrane-spanning segment. Topologically, residues 431-452 (QAMETNQGNPFTNFLQDTKISN) are lumenal.

Belongs to the LEM family. In terms of assembly, interacts with LMNB1, LMNB2, BANF1, AKAP8L, GMCL and chromosomes. In terms of processing, mitosis-specific phosphorylation specifically abolishes its binding to lamin B and chromosomes. Citrullinated by PADI4.

It localises to the nucleus inner membrane. The protein resides in the chromosome. May help direct the assembly of the nuclear lamina and thereby help maintain the structural organization of the nuclear envelope. Possible receptor for attachment of lamin filaments to the inner nuclear membrane. May be involved in the control of initiation of DNA replication through its interaction with NAKAP95. The chain is Lamina-associated polypeptide 2, isoforms beta/delta/epsilon/gamma (Tmpo) from Mus musculus (Mouse).